Here is a 263-residue protein sequence, read N- to C-terminus: (2Z,6E)-farnesyl diphosphate synthase (263 aa).

The active site involves aspartate 40. Aspartate 40 is a Mg(2+) binding site. Substrate is bound by residues 41–44, tryptophan 45, and 86–88; these read GNRR and STE. Asparagine 89 acts as the Proton acceptor in catalysis. Residues arginine 92, arginine 212, and 218–220 contribute to the substrate site; that span reads RLS. Glutamate 231 lines the Mg(2+) pocket.

This sequence belongs to the UPP synthase family. Z-FPP synthase subfamily. In terms of assembly, homodimer. Mg(2+) is required as a cofactor.

Its subcellular location is the cell membrane. It carries out the reaction isopentenyl diphosphate + (2E)-geranyl diphosphate = (2Z,6E)-farnesyl diphosphate + diphosphate. Catalyzes the condensation of only one isopentenyl pyrophosphate (IPP) unit in the cis configuration to E-geranyl diphosphate (E-GPP) generating the 15 carbon product (2Z,6E)-farnesyl diphosphate (Z-FPP or EZ-FPP). Z-FPP is the precursor of decaprenyl diphosphate, which has a central role in the biosynthesis of the mycobacterial cell wall. This chain is (2Z,6E)-farnesyl diphosphate synthase (uppS), found in Mycolicibacterium smegmatis (strain ATCC 700084 / mc(2)155) (Mycobacterium smegmatis).